Here is a 245-residue protein sequence, read N- to C-terminus: Ureidoacrylate amidohydrolase RutB (245 aa).

Catalysis depends on aspartate 41, which acts as the Proton acceptor. The active site involves lysine 150. The active-site Nucleophile is cysteine 183.

The protein belongs to the isochorismatase family. RutB subfamily.

The enzyme catalyses (Z)-3-ureidoacrylate + H2O + H(+) = (Z)-3-aminoacrylate + NH4(+) + CO2. It catalyses the reaction (Z)-3-ureidoacrylate + H2O = (Z)-3-aminoacrylate + carbamate + H(+). The catalysed reaction is (Z)-2-methylureidoacrylate + H2O + H(+) = (Z)-2-methylaminoacrylate + NH4(+) + CO2. In terms of biological role, hydrolyzes ureidoacrylate to form aminoacrylate and carbamate. The carbamate hydrolyzes spontaneously, thereby releasing one of the nitrogen atoms of the pyrimidine ring as ammonia and one of its carbon atoms as CO2. This chain is Ureidoacrylate amidohydrolase RutB, found in Pseudomonas savastanoi pv. phaseolicola (strain 1448A / Race 6) (Pseudomonas syringae pv. phaseolicola (strain 1448A / Race 6)).